Consider the following 397-residue polypeptide: Dual-specificity RNA methyltransferase RlmN (397 aa).

The active-site Proton acceptor is the E116. A Radical SAM core domain is found at 122-366; that stretch reads EDDRGTLCIS…SPIRKTRGDD (245 aa). Cysteines 129 and 371 form a disulfide. Residues C136, C140, and C143 each contribute to the [4Fe-4S] cluster site. S-adenosyl-L-methionine is bound by residues 195-196, S227, 249-251, and N328; these read GE and SFH. C371 acts as the S-methylcysteine intermediate in catalysis.

Belongs to the radical SAM superfamily. RlmN family. [4Fe-4S] cluster is required as a cofactor.

The protein resides in the cytoplasm. It catalyses the reaction adenosine(2503) in 23S rRNA + 2 reduced [2Fe-2S]-[ferredoxin] + 2 S-adenosyl-L-methionine = 2-methyladenosine(2503) in 23S rRNA + 5'-deoxyadenosine + L-methionine + 2 oxidized [2Fe-2S]-[ferredoxin] + S-adenosyl-L-homocysteine. The enzyme catalyses adenosine(37) in tRNA + 2 reduced [2Fe-2S]-[ferredoxin] + 2 S-adenosyl-L-methionine = 2-methyladenosine(37) in tRNA + 5'-deoxyadenosine + L-methionine + 2 oxidized [2Fe-2S]-[ferredoxin] + S-adenosyl-L-homocysteine. Specifically methylates position 2 of adenine 2503 in 23S rRNA and position 2 of adenine 37 in tRNAs. m2A2503 modification seems to play a crucial role in the proofreading step occurring at the peptidyl transferase center and thus would serve to optimize ribosomal fidelity. The protein is Dual-specificity RNA methyltransferase RlmN of Ruegeria sp. (strain TM1040) (Silicibacter sp.).